Reading from the N-terminus, the 1028-residue chain is MRKKVDERIRTLIENGVKLRHRSMFVIIGDKARDQIVNLHHILSKSVVKSNPSVLWCYKNRLDISSHNKKRAKQLKKMKERGQLDPEKLDAFSLFLDVVDVTHCLYKDSERILGNTFGICILQDFEALTPNLLARTIETVEGGGLVVLLLQSLASLTSLCTMVMDVHDRFRTESHSEASGRFNERFLLSLASCKACVVMDDELNLLPLSSHIKSITKVPTKEDSEALSEAERDLKSLKDALNDDFPVGPLINKCCTLDQGKAVVTFFDAILDKTLRSIVALIASRGRGKSAALGLAVAGAVAAGYSNIYVTAPSPDNLKTVFEFVCKGFDALEYKEHLEYDVVRSVNPEFNKAIVRINIFKQHRQTIQYIQPHEHEKLSQVELLVIDEAAAIPLPVVKSLLGPYLVFLSSTVSGYEGTGRSLSLKLLQQLEEQSRAPVTGVEGSLSGCLFKKIELSESIRYASGDPIESWLNGLLCLDVANCLPNPACHPLPSQCDLYYVNRDTLFSYHKDSELFLQRMMALCVSSHYKNSPNDLQLLSDAPAHHLFVLLGPVDESKNQLPDILCVIQVCLEGQISRKSAEKSLREGHSPHGDQIPWKFCEQFRDVVFPKLSGARIVRIAVHPNAMKMGYGSAAVELLTRYFEGQLASISEGDDELEVEPSPVRVTEAAAKVSLLEEQIKPRANLPPLLVPLRDRRPERLHYIGVSFGLTLDLFRFWRKHKFAPFYISQIPSAVTGEHTCMLLKPLTLSNDEFEVDESDELGFFAPFYKDFRIRFSKLLSDKFKKMDYKLAMSVLNPKINFPEVDLTGNSPDGFLKKLDGVLSPYDMERFRAYTANLVDFNLVYDICKTLAHHYFQEKLPVSLSYVQASVLLCLGLQESDFSSIERQMQLERGQIYSLLLKVGKKLYKYLNGIATKELESTLPRLKDRVLEPHKVSVDEDLREGAKEVEEQMRARIEELLDPELLDQFAIGDKEAEALQKSKISSSGLISIESTKTDNKKEKPSGFDKSAKKRGNDKHSSTSNKKRRA.

Residues 286–295 (GRGKSAALGL) and Arg-460 contribute to the ATP site. In terms of domain architecture, N-acetyltransferase spans 548-731 (VLLGPVDESK…FAPFYISQIP (184 aa)). Residues 619–621 (IAV), 626–632 (MKMGYGS), and Lys-719 contribute to the acetyl-CoA site. Residues 989–1028 (ISIESTKTDNKKEKPSGFDKSAKKRGNDKHSSTSNKKRRA) are disordered. Residues 994–1009 (TKTDNKKEKPSGFDKS) show a composition bias toward basic and acidic residues.

The protein belongs to the RNA cytidine acetyltransferase family. NAT10 subfamily.

The protein resides in the nucleus. The protein localises to the nucleolus. It catalyses the reaction a cytidine in 18S rRNA + acetyl-CoA + ATP + H2O = an N(4)-acetylcytidine in 18S rRNA + ADP + phosphate + CoA + H(+). The enzyme catalyses a cytidine in tRNA + acetyl-CoA + ATP + H2O = an N(4)-acetylcytidine in tRNA + ADP + phosphate + CoA + H(+). RNA cytidine acetyltransferase with specificity toward both 18S rRNA and tRNAs. Catalyzes the formation of N(4)-acetylcytidine (ac4C) in 18S rRNA. Required for early nucleolar cleavages of precursor rRNA at sites A0, A1 and A2 during 18S rRNA synthesis. Catalyzes the formation of ac4C in serine and leucine tRNAs. Requires a tRNA-binding adapter protein for full tRNA acetyltransferase activity but not for 18S rRNA acetylation. In Arabidopsis thaliana (Mouse-ear cress), this protein is RNA cytidine acetyltransferase 1.